The following is a 603-amino-acid chain: Putative lipase atg15 (603 aa).

Topologically, residues 1–20 (MDQPHRRTRKWHLMDLSVST) are cytoplasmic. The helical; Signal-anchor for type II membrane protein transmembrane segment at 21-41 (LLMSLALVLPSCVSAYQPVYF) threads the bilayer. Residues 42–603 (RSQEATPFIP…ITPAPILIDL (562 aa)) lie on the Lumenal side of the membrane. N-linked (GlcNAc...) asparagine glycosylation is found at N166, N201, N223, N281, and N305. S321 acts as the Charge relay system in catalysis. Residue N467 is glycosylated (N-linked (GlcNAc...) asparagine).

Belongs to the AB hydrolase superfamily. Lipase family. Binds to both phosphatidylinositol (PI) and phosphatidylinositol 3,5-bisphosphate (PIP2).

Its subcellular location is the endosome. The protein localises to the multivesicular body membrane. The protein resides in the prevacuolar compartment membrane. It carries out the reaction a triacylglycerol + H2O = a diacylglycerol + a fatty acid + H(+). In terms of biological role, lipase which is essential for lysis of subvacuolar cytoplasm to vacuole targeted bodies and intravacuolar autophagic bodies. Involved in the lysis of intravacuolar multivesicular body (MVB) vesicles. The intravacuolar membrane disintegration by atg15 is critical to life span extension. This chain is Putative lipase atg15 (atg15), found in Emericella nidulans (strain FGSC A4 / ATCC 38163 / CBS 112.46 / NRRL 194 / M139) (Aspergillus nidulans).